A 134-amino-acid polypeptide reads, in one-letter code: Aspartate 1-decarboxylase (134 aa).

Serine 25 functions as the Schiff-base intermediate with substrate; via pyruvic acid in the catalytic mechanism. Serine 25 bears the Pyruvic acid (Ser) mark. Threonine 57 provides a ligand contact to substrate. The active-site Proton donor is the tyrosine 58. 73-75 (GAA) provides a ligand contact to substrate.

It belongs to the PanD family. Heterooctamer of four alpha and four beta subunits. The cofactor is pyruvate. Is synthesized initially as an inactive proenzyme, which is activated by self-cleavage at a specific serine bond to produce a beta-subunit with a hydroxyl group at its C-terminus and an alpha-subunit with a pyruvoyl group at its N-terminus.

The protein localises to the cytoplasm. It catalyses the reaction L-aspartate + H(+) = beta-alanine + CO2. The protein operates within cofactor biosynthesis; (R)-pantothenate biosynthesis; beta-alanine from L-aspartate: step 1/1. Its function is as follows. Catalyzes the pyruvoyl-dependent decarboxylation of aspartate to produce beta-alanine. The sequence is that of Aspartate 1-decarboxylase from Citrifermentans bemidjiense (strain ATCC BAA-1014 / DSM 16622 / JCM 12645 / Bem) (Geobacter bemidjiensis).